A 394-amino-acid polypeptide reads, in one-letter code: Metallophosphoesterase 1 (394 aa).

A helical transmembrane segment spans residues 27–47; sequence TVVVISVLLFCEYFIYYLVLF. 6 residues coordinate a divalent metal cation: Asp74, Asp116, Asn154, His247, His301, and His303. A helical transmembrane segment spans residues 354-374; the sequence is TVLTTYCAAAAFLLVLILAHF.

Belongs to the metallophosphoesterase superfamily. MPPE1 family. In terms of assembly, interacts with GPI-anchor proteins (via the GPI portion). Interacts with TMED10. Mn(2+) is required as a cofactor.

The protein resides in the endoplasmic reticulum-Golgi intermediate compartment membrane. Functionally, metallophosphoesterase that catalyzes the removal of a side-chain ethanolamine-phosphate (EtNP) from the second mannose of the GPI-anchor protein intermediate. Participates in the glycan remodeling steps of GPI-anchor maturation to allow an efficient transport of GPI-anchor proteins from the endoplasmic reticulum to the Golgi. The sequence is that of Metallophosphoesterase 1 from Rattus norvegicus (Rat).